Here is a 191-residue protein sequence, read N- to C-terminus: MTDSDNPLILVTGNKNKVLEVKAILGPTATLEVLDINLPEIQGSVEEITREKCRAAAETIGGPVLVEDSALEMRALGGLPGAYVKAFVETIGNEGLNRILSAFDDKSAEAVCTFGYSQGPGHEPLLFQGRLQGRIVPARGVSSFGWEPIFEVEGEGVTLAEMEVGKKNGLSHRFKALVKFREWFLGARRPV.

12–17 is a binding site for ITP; it reads TGNKNK. Glutamate 40 contacts Mg(2+). ITP-binding positions include lysine 52, 68–69, lysine 85, 144–147, lysine 167, and 172–173; these read DS, FGWE, and HR.

The protein belongs to the HAM1 NTPase family. Homodimer. Mg(2+) serves as cofactor. Mn(2+) is required as a cofactor.

Its subcellular location is the cytoplasm. The protein localises to the nucleus. The catalysed reaction is ITP + H2O = IMP + diphosphate + H(+). It carries out the reaction dITP + H2O = dIMP + diphosphate + H(+). It catalyses the reaction XTP + H2O = XMP + diphosphate + H(+). Functionally, pyrophosphatase that hydrolyzes non-canonical purine nucleotides such as inosine triphosphate (ITP), deoxyinosine triphosphate (dITP) or xanthosine 5'-triphosphate (XTP) to their respective monophosphate derivatives. The enzyme does not distinguish between the deoxy- and ribose forms. Probably excludes non-canonical purines from RNA and DNA precursor pools, thus preventing their incorporation into RNA and DNA and avoiding chromosomal lesions. The sequence is that of Inosine triphosphate pyrophosphatase from Aspergillus oryzae (strain ATCC 42149 / RIB 40) (Yellow koji mold).